The primary structure comprises 357 residues: Popeye domain-containing protein 1 (357 aa).

At 1 to 38 the chain is on the extracellular side; that stretch reads MDTTAISPLTPLGVIPDLKNATSVPFNETACENWKEIH. Asn20 and Asn27 each carry an N-linked (GlcNAc...) asparagine glycan. Residues 39 to 59 traverse the membrane as a helical segment; it reads HLVFHVANICFAAGLVIPTTL. At 60 to 62 the chain is on the cytoplasmic side; it reads NLH. A helical transmembrane segment spans residues 63-83; the sequence is MIFLRGLLTVGCALFIIWATL. Over 84-89 the chain is Extracellular; that stretch reads YRCALD. A helical transmembrane segment spans residues 90–110; that stretch reads IMIWNSVFLVVNLLHFIYLVY. Residues 111–357 lie on the Cytoplasmic side of the membrane; the sequence is KRRPIKIEKE…AEKLELQRLP (247 aa). Low complexity predominate over residues 309-323; sequence GTSSSSSLRPGRTSP. A disordered region spans residues 309–357; that stretch reads GTSSSSSLRPGRTSPYLRTSAKMKPIEESVEDDVFEAPSAEKLELQRLP. The span at 347-357 shows a compositional bias: basic and acidic residues; that stretch reads SAEKLELQRLP.

This sequence belongs to the popeye family. As to quaternary structure, homodimer. Homodimerization requires the C-terminus cytoplasmic region. In terms of tissue distribution, expressed in the heart and skeletal muscle (at protein level). Isoform 1 and isoform 4: expressed in heart, muscle, brain, stomach, kidney, lung and spleen.

Its subcellular location is the lateral cell membrane. It localises to the cell junction. The protein localises to the tight junction. The protein resides in the membrane. It is found in the cell membrane. Its subcellular location is the sarcolemma. It localises to the caveola. Cell adhesion molecule involved in the establishment and/or maintenance of cell integrity. Involved in the formation and regulation of the tight junction (TJ) paracellular permeability barrier in epithelial cells. Induces primordial adhesive contact and aggregation of epithelial cells in a Ca(2+)-independent manner. Involved in epithelial movement during corneal sheet formation and regeneration. May play a role in VAMP3-mediated vesicular transport and recycling of receptor molecules. May play a role in the regulation of cell shape and movement by modulating the Rho-GTPase activity. May be involved in skeletal muscle and heart development as well as in the maintenance of heart function. May also be involved in striated muscle regeneration and in the regulation of cell spreading. This chain is Popeye domain-containing protein 1 (POPDC1), found in Gallus gallus (Chicken).